A 217-amino-acid chain; its full sequence is D-methionine transport system permease protein MetI (217 aa).

One can recognise an ABC transmembrane type-1 domain in the interval 13-204 (VWETLMMTFV…LLVILVYLIQ (192 aa)). Transmembrane regions (helical) follow at residues 20–40 (TFVSGFFGFVLGLPVGVLLYV), 58–78 (GVVNIFRSIPFIILLVWMIPF), 81–101 (MIVGTSIGLQAAIVPLTVGAA), 152–172 (ITLITLVGYSAMGGAVGAGGL), and 186–206 (ATVMNTVLVLLVILVYLIQLS).

The protein belongs to the binding-protein-dependent transport system permease family. CysTW subfamily.

The protein localises to the cell inner membrane. Its function is as follows. Part of the binding-protein-dependent transport system for D-methionine and the toxic methionine analog alpha-methyl-methionine. Probably responsible for the translocation of the substrate across the membrane. The protein is D-methionine transport system permease protein MetI (metI) of Yersinia pestis.